Here is a 311-residue protein sequence, read N- to C-terminus: Acetyl-coenzyme A carboxylase carboxyl transferase subunit beta (311 aa).

The region spanning L27–G296 is the CoA carboxyltransferase N-terminal domain. 4 residues coordinate Zn(2+): C31, C34, C50, and C53. Residues C31–C53 form a C4-type zinc finger. Positions A286–P299 are enriched in low complexity. The interval A286–D311 is disordered.

It belongs to the AccD/PCCB family. As to quaternary structure, acetyl-CoA carboxylase is a heterohexamer composed of biotin carboxyl carrier protein (AccB), biotin carboxylase (AccC) and two subunits each of ACCase subunit alpha (AccA) and ACCase subunit beta (AccD). Zn(2+) serves as cofactor.

It is found in the cytoplasm. It carries out the reaction N(6)-carboxybiotinyl-L-lysyl-[protein] + acetyl-CoA = N(6)-biotinyl-L-lysyl-[protein] + malonyl-CoA. It participates in lipid metabolism; malonyl-CoA biosynthesis; malonyl-CoA from acetyl-CoA: step 1/1. In terms of biological role, component of the acetyl coenzyme A carboxylase (ACC) complex. Biotin carboxylase (BC) catalyzes the carboxylation of biotin on its carrier protein (BCCP) and then the CO(2) group is transferred by the transcarboxylase to acetyl-CoA to form malonyl-CoA. This is Acetyl-coenzyme A carboxylase carboxyl transferase subunit beta from Alkalilimnicola ehrlichii (strain ATCC BAA-1101 / DSM 17681 / MLHE-1).